Consider the following 391-residue polypeptide: MSRSAEEVEATLQIAKVDLEDLRNTVHCLTFSSDFTSGDYSLMELDDTLCKQIEAGDSLVIRGDKSDHAVLCSQDKTYDLKIADTSNLLLFIPGCKTPDQLPADQQPLTIINCEIAGFSNHYWELRRCRPKLKKLKKLLMENTYNGPENERESQDNSLHTTEDLLNMIQASNEELVDHLKAIHACSINGFWRLLDFDYEMKLLNHITQLIDSESWSFSKVPLPVCLQELRSLEPEEMIEHCLTCYGKRLIDEGTGGDFFALDEDKICRATALMLLQNAVKFNLAEFQEVWQQSVPEGMNTRLDQLKGLALVDRTSRPETIFLLKTEDLPEDTQERFNTLFGMREKWAEADIAPYIKDLCGEKQTIGALLTKYARSSMQNGIKLYNSRRPLS.

It belongs to the DCC1 family. Component of the ctf18-RFC complex which consists of ctf18, ctf8, dscc1 and the RFC complex.

It is found in the nucleus. In terms of biological role, loads pcna onto primed templates regulating velocity, spacing and restart activity of replication forks. May couple DNA replication to sister chromatid cohesion. In Xenopus tropicalis (Western clawed frog), this protein is Sister chromatid cohesion protein DCC1 (dscc1).